We begin with the raw amino-acid sequence, 399 residues long: uncharacterized protein (399 aa).

A compositionally biased stretch (polar residues) spans 197–206 (ENSSASSVTS). The disordered stretch occupies residues 197–224 (ENSSASSVTSEECEQDVMDEQSAEDNEE). Residues 207-224 (EECEQDVMDEQSAEDNEE) show a composition bias toward acidic residues.

This is an uncharacterized protein from Diadromus pulchellus (Parasitic wasp).